Consider the following 175-residue polypeptide: MAETTVETPVEGTEGEETFAEVTTFESEVPVEGEYTSESLAGRFGDPQPAAGLGRRKNAIARVRIVPGTGKWKINGRTLEDYFPNKVHQQEVNEPFKVLELDGRYDVIARISGGGVSGQAGALRLGVARSLNEADVDNNRATLKKAGFLSRDDRAVERKKAGLKKARKAPQYSKR.

The protein belongs to the universal ribosomal protein uS9 family.

In Streptomyces griseus subsp. griseus (strain JCM 4626 / CBS 651.72 / NBRC 13350 / KCC S-0626 / ISP 5235), this protein is Small ribosomal subunit protein uS9.